The following is a 315-amino-acid chain: Gamma-hemolysin component C (315 aa).

The N-terminal stretch at 1–29 (MLKNKILTTTLSVSLLAPLANPLLENAKA) is a signal peptide.

Belongs to the aerolysin family. Toxicity requires sequential binding and synergistic association of a class S and a class F component which form heterooligomeric complexes. HlgC (class S) associates with HlgB (class F) thus forming an CB toxin.

Its function is as follows. Toxin that seems to act by forming pores in the membrane of the cell. Has a hemolytic and a leucotoxic activity. The chain is Gamma-hemolysin component C (hlgC) from Staphylococcus aureus (strain COL).